A 110-amino-acid polypeptide reads, in one-letter code: Multidrug transporter EmrE (110 aa).

Transmembrane regions (helical) follow at residues 4-21, 34-52, 58-80, and 87-104; these read YIYL…TTLM, VGTI…QTLA, IAYA…GFFG, and AIIG…INLL.

This sequence belongs to the drug/metabolite transporter (DMT) superfamily. Small multidrug resistance (SMR) (TC 2.A.7.1) family. In terms of assembly, homodimer. Forms an antiparallel dimeric structure. Also forms dimers of homodimers.

Its subcellular location is the cell inner membrane. Substrate identity influences both the ground-state and transition-state energies for the conformational exchange process, emphasizing the coupling between substrate binding and transport. Its function is as follows. Multidrug efflux protein that confers resistance to a wide range of toxic compounds, including ethidium, methyl viologen, acriflavine, tetraphenylphosphonium (TPP(+)), benzalkonium, propidium, dequalinium and the aminoglycoside antibiotics streptomycin and tobramycin. Can also transport the osmoprotectants betaine and choline. The drug efflux is coupled to an influx of protons. Can couple antiport of a drug to either one or two protons, performing both electrogenic and electroneutral transport of a single substrate. Simultaneously binds and cotransports proton and drug. The sequence is that of Multidrug transporter EmrE (emrE) from Escherichia coli (strain K12).